The following is a 637-amino-acid chain: Protein arginine N-methyltransferase 5 (637 aa).

Position 2 is an N-acetylalanine (Ala-2). Residues 13-292 (RVSSGRDLNC…YLEYLSQNRP (280 aa)) are TIM barrel. Residues 308–615 (LQSPLQPLMD…SNSKKVWYEW (308 aa)) enclose the SAM-dependent MTase PRMT-type domain. Tyr-324 serves as a coordination point for S-adenosyl-L-methionine. A protein is bound at residue Phe-327. S-adenosyl-L-methionine is bound by residues 333–334 (KY), Glu-392, and 419–420 (DM). A protein-binding residues include Glu-435 and Glu-444. Residues Glu-435 and Glu-444 each act as proton donor/acceptor in the active site. The tract at residues 465–637 (PGEYTSFLAP…PTGRSYTIGL (173 aa)) is beta barrel. Residues 488–494 (REKDRDP) are dimerization.

The protein belongs to the class I-like SAM-binding methyltransferase superfamily. Protein arginine N-methyltransferase family. As to quaternary structure, forms, at least, homodimers and homotetramers. Component of the methylosome complex, composed of PRMT5, WDR77 and CLNS1A. Found in a complex composed of PRMT5, WDR77 and RIOK1. RIOK1 and CLNS1A associate with PRMT5 in a mutually exclusive fashion, which allows the recruitment of distinct methylation substrates, such as nucleolin/NCL and Sm proteins, respectively. Interacts with PRDM1. Identified in a complex composed of methylosome and PRMT1 and ERH. Interacts with EGFR; methylates EGFR and stimulates EGFR-mediated ERK activation. Interacts with HOXA9. Interacts with SRGAP2. Found in a complex with COPRS, RUNX1 and CBFB. Interacts with CHTOP; the interaction symmetrically methylates CHTOP, but seems to require the presence of PRMT1. Interacts with EPB41L3; this modulates methylation of target proteins. Component of a high molecular weight E2F-pocket protein complex, CERC (cyclin E1 repressor complex). Associates with SWI/SNF remodeling complexes containing SMARCA2 and SMARCA4. Interacts with JAK2, SSTR1, SUPT5H, BRAF and with active RAF1. Interacts with LSM11, PRMT7 and SNRPD3. Interacts with COPRS; promoting its recruitment on histone H4. Interacts with CLNS1A/pICln. Identified in a complex with CLNS1A/pICln and Sm proteins. Interacts with RPS10. Interacts with WDR77. Interacts with IWS1. Interacts with CRY1. Interacts with POLR2A. Interacts with SMN1/SMN2. Interacts with LYAR; this interaction is direct. Interacts with TTC5/STRAP; this interaction is DNA damage-dependent and promotes PRMT5 interaction with p53/TP53. Interacts with p53/TP53 in response to DNA damage; the interaction is TTC5/STRAP dependent. Interacts with FAM47E; the interaction is direct, promotes PRMT5 localization to chromatin, and does not disrupt its association with WDR77 or STUB1. Interacts with TDRD6. Interacts with STUB1. Interacts with MBD2. Does not interact with MBD3.

It is found in the cytoplasm. Its subcellular location is the nucleus. The protein localises to the golgi apparatus. The catalysed reaction is L-arginyl-[protein] + 2 S-adenosyl-L-methionine = N(omega),N(omega)'-dimethyl-L-arginyl-[protein] + 2 S-adenosyl-L-homocysteine + 2 H(+). Its activity is regulated as follows. Activity is increased by EGF, HGF, FGF1 or FGF2 treatments, and slightly decreased by NGF treatment. Arginine methyltransferase that can both catalyze the formation of omega-N monomethylarginine (MMA) and symmetrical dimethylarginine (sDMA), with a preference for the formation of MMA. Specifically mediates the symmetrical dimethylation of arginine residues in the small nuclear ribonucleoproteins Sm D1 (SNRPD1) and Sm D3 (SNRPD3); such methylation being required for the assembly and biogenesis of snRNP core particles. Methylates SUPT5H and may regulate its transcriptional elongation properties. May methylate the N-terminal region of MBD2. Mono- and dimethylates arginine residues of myelin basic protein (MBP) in vitro. May play a role in cytokine-activated transduction pathways. Negatively regulates cyclin E1 promoter activity and cellular proliferation. Methylates histone H2A and H4 'Arg-3' during germ cell development. Methylates histone H3 'Arg-8', which may repress transcription. Methylates the Piwi proteins (PIWIL1, PIWIL2 and PIWIL4), methylation of Piwi proteins being required for the interaction with Tudor domain-containing proteins and subsequent localization to the meiotic nuage. Methylates RPS10. Attenuates EGF signaling through the MAPK1/MAPK3 pathway acting at 2 levels. First, monomethylates EGFR; this enhances EGFR 'Tyr-1197' phosphorylation and PTPN6 recruitment, eventually leading to reduced SOS1 phosphorylation. Second, methylates RAF1 and probably BRAF, hence destabilizing these 2 signaling proteins and reducing their catalytic activity. Required for induction of E-selectin and VCAM-1, on the endothelial cells surface at sites of inflammation. Methylates HOXA9. Methylates and regulates SRGAP2 which is involved in cell migration and differentiation. Acts as a transcriptional corepressor in CRY1-mediated repression of the core circadian component PER1 by regulating the H4R3 dimethylation at the PER1 promoter. Methylates GM130/GOLGA2, regulating Golgi ribbon formation. Methylates H4R3 in genes involved in glioblastomagenesis in a CHTOP- and/or TET1-dependent manner. Symmetrically methylates POLR2A, a modification that allows the recruitment to POLR2A of proteins including SMN1/SMN2 and SETX. This is required for resolving RNA-DNA hybrids created by RNA polymerase II, that form R-loop in transcription terminal regions, an important step in proper transcription termination. Along with LYAR, binds the promoter of gamma-globin HBG1/HBG2 and represses its expression. Symmetrically methylates NCL. Methylates p53/TP53; methylation might possibly affect p53/TP53 target gene specificity. Involved in spliceosome maturation and mRNA splicing in prophase I spermatocytes through the catalysis of the symmetrical arginine dimethylation of SNRPB (small nuclear ribonucleoprotein-associated protein) and the interaction with tudor domain-containing protein TDRD6. The chain is Protein arginine N-methyltransferase 5 (PRMT5) from Bos taurus (Bovine).